The primary structure comprises 202 residues: Orotate phosphoribosyltransferase (202 aa).

Residues K93 and 113–121 contribute to the 5-phospho-alpha-D-ribose 1-diphosphate site; that span reads EDIITTGGS. Orotate contacts are provided by T117 and R145.

Belongs to the purine/pyrimidine phosphoribosyltransferase family. PyrE subfamily. As to quaternary structure, homodimer. Mg(2+) is required as a cofactor.

It carries out the reaction orotidine 5'-phosphate + diphosphate = orotate + 5-phospho-alpha-D-ribose 1-diphosphate. The protein operates within pyrimidine metabolism; UMP biosynthesis via de novo pathway; UMP from orotate: step 1/2. Its function is as follows. Catalyzes the transfer of a ribosyl phosphate group from 5-phosphoribose 1-diphosphate to orotate, leading to the formation of orotidine monophosphate (OMP). The sequence is that of Orotate phosphoribosyltransferase from Campylobacter jejuni subsp. doylei (strain ATCC BAA-1458 / RM4099 / 269.97).